Reading from the N-terminus, the 160-residue chain is Small ribosomal subunit protein uS9 (160 aa).

This sequence belongs to the universal ribosomal protein uS9 family.

This is Small ribosomal subunit protein uS9 from Rhodopseudomonas palustris (strain ATCC BAA-98 / CGA009).